Here is a 505-residue protein sequence, read N- to C-terminus: RNA-splicing ligase RtcB homolog (505 aa).

Mn(2+) contacts are provided by Asp119, Cys122, His227, and His259. Asn226–Glu230 contacts GMP. Residue Ser300 is modified to Phosphoserine. His353 contributes to the Mn(2+) binding site. GMP contacts are provided by residues His353–Asn354, Gly402–Met405, Ser409, and His428–Gly431. The active-site GMP-histidine intermediate is the His428. A Glycyl lysine isopeptide (Lys-Gly) (interchain with G-Cter in SUMO2) cross-link involves residue Lys496. Lys504 contacts GMP.

It belongs to the RtcB family. As to quaternary structure, catalytic component of the tRNA-splicing ligase complex. It depends on Mn(2+) as a cofactor.

The protein localises to the nucleus. It is found in the cytoplasm. It carries out the reaction a 3'-end 3'-phospho-ribonucleotide-RNA + a 5'-end dephospho-ribonucleoside-RNA + GTP = a ribonucleotidyl-ribonucleotide-RNA + GMP + diphosphate. The catalysed reaction is a 3'-end 2',3'-cyclophospho-ribonucleotide-RNA + a 5'-end dephospho-ribonucleoside-RNA + GTP + H2O = a ribonucleotidyl-ribonucleotide-RNA + GMP + diphosphate + H(+). Its activity is regulated as follows. Protein archease stimulates the activity of the tRNA ligase complex with high efficiency in the presence of GTP. Functionally, catalytic subunit of the tRNA-splicing ligase complex that acts by directly joining spliced tRNA halves to mature-sized tRNAs by incorporating the precursor-derived splice junction phosphate into the mature tRNA as a canonical 3',5'-phosphodiester. May act as an RNA ligase with broad substrate specificity, and may function toward other RNAs. This is RNA-splicing ligase RtcB homolog from Homo sapiens (Human).